A 173-amino-acid chain; its full sequence is uncharacterized protein (173 aa).

Residues 1-23 (ELTSVAGSGRVDSTPLGSRGVTD) form a disordered region.

In terms of tissue distribution, component of the acid-insoluble and acid-soluble organic matrix of calcified layers of the shell (at protein level).

The protein localises to the secreted. This is an uncharacterized protein from Lottia gigantea (Giant owl limpet).